A 448-amino-acid polypeptide reads, in one-letter code: Ribosomal protein uS12 methylthiotransferase RimO (448 aa).

An MTTase N-terminal domain is found at 10-120 (PNIGFVSLGC…VMEHVHKYVP (111 aa)). The [4Fe-4S] cluster site is built by Cys-19, Cys-55, Cys-84, Cys-152, Cys-156, and Cys-159. The Radical SAM core domain maps to 138-379 (LTPKHYAYLK…MELQQQISAQ (242 aa)). One can recognise a TRAM domain in the interval 382–448 (QQKIGKTLPV…ADEYDLWGTC (67 aa)).

Belongs to the methylthiotransferase family. RimO subfamily. [4Fe-4S] cluster serves as cofactor.

It localises to the cytoplasm. It carries out the reaction L-aspartate(89)-[ribosomal protein uS12]-hydrogen + (sulfur carrier)-SH + AH2 + 2 S-adenosyl-L-methionine = 3-methylsulfanyl-L-aspartate(89)-[ribosomal protein uS12]-hydrogen + (sulfur carrier)-H + 5'-deoxyadenosine + L-methionine + A + S-adenosyl-L-homocysteine + 2 H(+). Its function is as follows. Catalyzes the methylthiolation of an aspartic acid residue of ribosomal protein uS12. The polypeptide is Ribosomal protein uS12 methylthiotransferase RimO (Mannheimia succiniciproducens (strain KCTC 0769BP / MBEL55E)).